Reading from the N-terminus, the 266-residue chain is OCIA domain-containing protein 1 (266 aa).

An OCIA domain is found at 1 to 114; sequence MSQASSGFTP…MKLENSPLGE (114 aa). 2 disordered regions span residues 127–213 and 225–266; these read EMNQ…DVPK and KNRE…SWEE. Residues 135-155 are compositionally biased toward polar residues; the sequence is PNSSESQQPGSESVQQPATEV. Low complexity predominate over residues 156–178; that stretch reads SSATESYSSYTSDYTYSTPSQSY. Over residues 179–188 the composition is skewed to polar residues; the sequence is ETTPFSSGFS. The span at 250–266 shows a compositional bias: basic and acidic residues; sequence QPKKEAKKNKYGDSWEE.

The protein belongs to the OCIAD1 family.

The protein localises to the endosome. This Danio rerio (Zebrafish) protein is OCIA domain-containing protein 1 (ociad1).